Consider the following 79-residue polypeptide: Putative membrane protein insertion efficiency factor (79 aa).

Belongs to the UPF0161 family.

It localises to the cell inner membrane. Could be involved in insertion of integral membrane proteins into the membrane. The chain is Putative membrane protein insertion efficiency factor from Thermotoga neapolitana (strain ATCC 49049 / DSM 4359 / NBRC 107923 / NS-E).